We begin with the raw amino-acid sequence, 548 residues long: MAAKEVIFGDAARAKMVEGVNVLANAVKVTLGPKGRNVVLERSFGAPTVTKDGVSVAKEIELKDKLQNMGAQLVKEVASRTSDNAGDGTTTATVLAQAIVREGMKYVAAGMNPMDLKRGIDKAVAATVEQLAAIAKPCTTTKEIAQVGSISANSDASIGERIAEAMEKVGKEGVITVEDGKSLNDELDIVEGMQFDRGYLSPYFINNPEKQTAILENPFILLCDKKISNIRDLLPVLEQVAKAGRPLLIIAEDIEGEALATLVVNNIRGILKTCAVKAPGFGDRRKAMLEDIAILSGGQVVAEEVGLTLEKITLEELGQAKRIEIGKENTTLIDGNGQAVTIEARVKQIRAQIEEATSDYDREKLQERVAKLAGGVAVIKVGAATEVEMKEKKARVEDALHATRAAVEEGIVPGGGVALLRARAAIKIKGDNPDQEAGIRIVLRAMEEPLRMIVQNAGEEASVVVAKVLEGKGNFGYNAANGTYGDMVEMGVLDPAKVTRSALQNAASIAALLLTTDCMVAEVAEDKAAGGMGDMGGMGGMGGMGGMM.

Residues 30–33 (TLGP), lysine 51, 87–91 (DGTTT), glycine 415, 478–480 (NAA), and aspartate 494 contribute to the ATP site.

This sequence belongs to the chaperonin (HSP60) family. Forms a cylinder of 14 subunits composed of two heptameric rings stacked back-to-back. Interacts with the co-chaperonin GroES.

The protein resides in the cytoplasm. It carries out the reaction ATP + H2O + a folded polypeptide = ADP + phosphate + an unfolded polypeptide.. Its function is as follows. Together with its co-chaperonin GroES, plays an essential role in assisting protein folding. The GroEL-GroES system forms a nano-cage that allows encapsulation of the non-native substrate proteins and provides a physical environment optimized to promote and accelerate protein folding. This Janthinobacterium sp. (strain Marseille) (Minibacterium massiliensis) protein is Chaperonin GroEL.